Here is a 107-residue protein sequence, read N- to C-terminus: uncharacterized protein (107 aa).

The next 4 membrane-spanning stretches (helical) occupy residues 9–28 (FLVFISFFIILLGILDLIME), 33–50 (SYIIILVGLASLFASLNI), 55–72 (LAIAVCIAAAVFIEAIHV), and 77–99 (YRVILYAIGSLPLIISVGSYLKG).

The protein localises to the cell membrane. This is an uncharacterized protein from Archaeoglobus fulgidus (strain ATCC 49558 / DSM 4304 / JCM 9628 / NBRC 100126 / VC-16).